Consider the following 247-residue polypeptide: ATP synthase subunit a, chloroplastic (247 aa).

The next 5 membrane-spanning stretches (helical) occupy residues 38–58 (QVLITSWVVITILLGSVVIAV), 95–115 (VPFIGTMFLFIFVSNWSGALL), 134–154 (INTTVALALLTSAAYFYAGLS), 199–219 (LVVVVLVSLVPLVIPIPVMFL), and 220–240 (GLFTSGIQALIFATLAAAYIG).

This sequence belongs to the ATPase A chain family. F-type ATPases have 2 components, CF(1) - the catalytic core - and CF(0) - the membrane proton channel. CF(1) has five subunits: alpha(3), beta(3), gamma(1), delta(1), epsilon(1). CF(0) has four main subunits: a, b, b' and c.

Its subcellular location is the plastid. It is found in the chloroplast thylakoid membrane. Its function is as follows. Key component of the proton channel; it plays a direct role in the translocation of protons across the membrane. In Hordeum vulgare (Barley), this protein is ATP synthase subunit a, chloroplastic.